The chain runs to 201 residues: Peptidyl-tRNA hydrolase (201 aa).

Residue Tyr17 coordinates tRNA. Residue His22 is the Proton acceptor of the active site. The tRNA site is built by Phe76, Asn78, and Asn124.

The protein belongs to the PTH family. In terms of assembly, monomer.

It localises to the cytoplasm. It carries out the reaction an N-acyl-L-alpha-aminoacyl-tRNA + H2O = an N-acyl-L-amino acid + a tRNA + H(+). Its function is as follows. Hydrolyzes ribosome-free peptidyl-tRNAs (with 1 or more amino acids incorporated), which drop off the ribosome during protein synthesis, or as a result of ribosome stalling. Functionally, catalyzes the release of premature peptidyl moieties from peptidyl-tRNA molecules trapped in stalled 50S ribosomal subunits, and thus maintains levels of free tRNAs and 50S ribosomes. This is Peptidyl-tRNA hydrolase from Nitratidesulfovibrio vulgaris (strain ATCC 29579 / DSM 644 / CCUG 34227 / NCIMB 8303 / VKM B-1760 / Hildenborough) (Desulfovibrio vulgaris).